The sequence spans 673 residues: Methionine--tRNA ligase (673 aa).

A 'HIGH' region motif is present at residues 15–25 (PYANGPIHLGH). Zn(2+)-binding residues include Cys-146, Cys-149, Cys-159, and Cys-162. Positions 332–336 (KMSKS) match the 'KMSKS' region motif. Position 335 (Lys-335) interacts with ATP. The tRNA-binding domain maps to 572–673 (DFAKLDLRIA…EGAQPGMRVK (102 aa)).

This sequence belongs to the class-I aminoacyl-tRNA synthetase family. MetG type 1 subfamily. As to quaternary structure, homodimer. The cofactor is Zn(2+).

It is found in the cytoplasm. It carries out the reaction tRNA(Met) + L-methionine + ATP = L-methionyl-tRNA(Met) + AMP + diphosphate. Its function is as follows. Is required not only for elongation of protein synthesis but also for the initiation of all mRNA translation through initiator tRNA(fMet) aminoacylation. This Shewanella loihica (strain ATCC BAA-1088 / PV-4) protein is Methionine--tRNA ligase.